Reading from the N-terminus, the 340-residue chain is MNVFEPRLSSWLVNSGDDDDVVLSSRIRLARNLKDERFPIYEQKEAIVDNIAEVFDENFTLFKMNQISVLQKALLVEKHLISPYMMKKSKYGAVLLNEEENVSIMLNEEDHLRIQCMTPGLRLFDALEAALQIDGHVEEKLTYAFDKQFGYLTSCVTNIGTGLRASVMVHLPGLVTTKRIKSVIEAIRSLGFVVRGIYGEGSMPASSIFQVSNQVTLGKTETEIVEDLTQVMEQIIMQERVARTTLKQKFHIALEDRVFRSYGLLMNCRIISMQEAADAISDIRLGVELGFFEHISRQKMNELVLFSQPAFLRKEAGRDMDELEEKVIRAKVIREILGDK.

Residues 21–242 (VVLSSRIRLA…EQIIMQERVA (222 aa)) form the Phosphagen kinase C-terminal domain. ATP is bound by residues 24 to 28 (SSRIR), histidine 79, arginine 113, 164 to 168 (RASVM), and 195 to 200 (RGIYGE).

Belongs to the ATP:guanido phosphotransferase family.

It catalyses the reaction L-arginyl-[protein] + ATP = N(omega)-phospho-L-arginyl-[protein] + ADP + H(+). Catalyzes the specific phosphorylation of arginine residues in proteins. The chain is Protein-arginine kinase from Listeria welshimeri serovar 6b (strain ATCC 35897 / DSM 20650 / CCUG 15529 / CIP 8149 / NCTC 11857 / SLCC 5334 / V8).